Reading from the N-terminus, the 350-residue chain is MRASTACLVALLAPFYISALPVEYFYGDEQQPIEEGAENSAVFEQDRELIGLFNPSKEIGQVSGLAVNKNGHIVAFHRSGRVWDEKSFNDHETFNKDLGVINNKTIAIISREKKVIDEFGAGLFYMPHGLTIDNNGDYWVTDVGSHQVHKIDAKTQKIVMSLGEKMVPGEDQAHFCKPTDVAVAKNGHIFVADGYCNSRILKFDAKGNLMAQINAATEENQPSEFVVPHSLSLIEDMNIVCVADRENQRVQCFSAGLSEGDRTLPTGIPITSATDIGRVFAIREREHYLIGVTGNSEDVEAQMFSIDMQTGKTETFAKGVRNTHALAIAADGVMFVSQLEPSRILEIRLL.

An N-terminal signal peptide occupies residues 1-19 (MRASTACLVALLAPFYISA). One copy of the NHL 1 repeat lies at 46–90 (DRELIGLFNPSKEIGQVSGLAVNKNGHIVAFHRSGRVWDEKSFND). Residue Asn-103 is glycosylated (N-linked (GlcNAc...) asparagine). 3 NHL repeats span residues 113 to 154 (KKVI…IDAK), 162 to 206 (LGEK…FDAK), and 212 to 256 (QINA…FSAG). 2 cysteine pairs are disulfide-bonded: Cys-176–Cys-196 and Cys-241–Cys-252.

This sequence belongs to the peptidyl-alpha-hydroxyglycine alpha-amidating lyase family. Zn(2+) is required as a cofactor.

The protein localises to the secreted. It catalyses the reaction a [peptide]-C-terminal (2S)-2-hydroxyglycine = a [peptide]-C-terminal amide + glyoxylate. In terms of biological role, probable lyase that catalyzes an essential reaction in C-terminal alpha-amidation of peptides. Mediates the dismutation of the unstable peptidyl(2-hydroxyglycine) intermediate to glyoxylate and the corresponding desglycine peptide amide. C-terminal amidation of peptides such as neuropeptides is essential for full biological activity. The sequence is that of Probable peptidyl-alpha-hydroxyglycine alpha-amidating lyase pgal-1 from Caenorhabditis elegans.